Consider the following 282-residue polypeptide: 1,4-dihydroxy-6-naphtoate synthase (282 aa).

Substrate-binding positions include 57 to 59 and 109 to 110; these read KVS and TA. The active-site Proton acceptor is the His-153.

This sequence belongs to the MqnA/MqnD family. MqnD subfamily.

It catalyses the reaction cyclic dehypoxanthinylfutalosinate = 1,4-dihydroxy-6-naphthoate + dihydroxyacetone. It participates in quinol/quinone metabolism; menaquinone biosynthesis. In terms of biological role, catalyzes the conversion of cyclic dehypoxanthine futalosine (cyclic DHFL) into 1,4-dihydroxy-6-naphthoate, a step in the biosynthesis of menaquinone (MK, vitamin K2). This is 1,4-dihydroxy-6-naphtoate synthase from Streptomyces coelicolor (strain ATCC BAA-471 / A3(2) / M145).